The primary structure comprises 124 residues: MKVLILVLLAVVILQAAPIRKLEDLLPTRYPPDHELVYWCTYANQCDFCWECVHGICRNRIQADWPVIHQNDWIINCTVSRWNGICSYYEGPRNHTDHQMDCANPTSHTYPHREYMKIYERDDL.

The first 16 residues, 1-16, serve as a signal peptide directing secretion; sequence MKVLILVLLAVVILQA. N-linked (GlcNAc...) asparagine; by host glycans are attached at residues Asn-76 and Asn-94.

Belongs to the asfivirus MGF 110 family.

Plays a role in virus cell tropism, and may be required for efficient virus replication in macrophages. This Ornithodoros (relapsing fever ticks) protein is Protein MGF 110-8L.